A 250-amino-acid chain; its full sequence is Hydroxyacylglutathione hydrolase (250 aa).

Zn(2+) is bound by residues His52, His54, Asp56, His57, His107, Asp128, and His166.

It belongs to the metallo-beta-lactamase superfamily. Glyoxalase II family. In terms of assembly, monomer. The cofactor is Zn(2+).

It catalyses the reaction an S-(2-hydroxyacyl)glutathione + H2O = a 2-hydroxy carboxylate + glutathione + H(+). Its pathway is secondary metabolite metabolism; methylglyoxal degradation; (R)-lactate from methylglyoxal: step 2/2. In terms of biological role, thiolesterase that catalyzes the hydrolysis of S-D-lactoyl-glutathione to form glutathione and D-lactic acid. This Neisseria meningitidis serogroup A / serotype 4A (strain DSM 15465 / Z2491) protein is Hydroxyacylglutathione hydrolase.